Reading from the N-terminus, the 149-residue chain is 3-dehydroquinate dehydratase (149 aa).

The Proton acceptor role is filled by Tyr-26. The substrate site is built by Asn-77, His-83, and Asp-90. Catalysis depends on His-103, which acts as the Proton donor. Residues 104–105 (LS) and Arg-114 each bind substrate.

Belongs to the type-II 3-dehydroquinase family. Homododecamer.

It catalyses the reaction 3-dehydroquinate = 3-dehydroshikimate + H2O. Its pathway is metabolic intermediate biosynthesis; chorismate biosynthesis; chorismate from D-erythrose 4-phosphate and phosphoenolpyruvate: step 3/7. Catalyzes a trans-dehydration via an enolate intermediate. This chain is 3-dehydroquinate dehydratase, found in Haemophilus influenzae (strain 86-028NP).